Reading from the N-terminus, the 198-residue chain is dTTP/UTP pyrophosphatase (198 aa).

The active-site Proton acceptor is D75.

The protein belongs to the Maf family. YhdE subfamily. A divalent metal cation serves as cofactor.

Its subcellular location is the cytoplasm. It carries out the reaction dTTP + H2O = dTMP + diphosphate + H(+). The catalysed reaction is UTP + H2O = UMP + diphosphate + H(+). In terms of biological role, nucleoside triphosphate pyrophosphatase that hydrolyzes dTTP and UTP. May have a dual role in cell division arrest and in preventing the incorporation of modified nucleotides into cellular nucleic acids. This chain is dTTP/UTP pyrophosphatase, found in Wolbachia sp. subsp. Brugia malayi (strain TRS).